The chain runs to 434 residues: Alpha-enolase (434 aa).

Position 40 (serine 40) interacts with Mg(2+). Substrate contacts are provided by histidine 158 and glutamate 167. Catalysis depends on glutamate 210, which acts as the Proton donor. Mg(2+)-binding residues include aspartate 245, glutamate 293, and aspartate 318. Positions 293 and 318 each coordinate substrate. Lysine 343 acts as the Proton acceptor in catalysis. Residues serine 370–serine 373 and lysine 394 contribute to the substrate site.

This sequence belongs to the enolase family. Homodimer. It depends on Mg(2+) as a cofactor.

It localises to the cytoplasm. The enzyme catalyses (2R)-2-phosphoglycerate = phosphoenolpyruvate + H2O. The protein operates within carbohydrate degradation; glycolysis; pyruvate from D-glyceraldehyde 3-phosphate: step 4/5. Functionally, both an enzyme and a lens structural protein. The protein is Alpha-enolase (ENO1) of Anas platyrhynchos (Mallard).